The sequence spans 345 residues: UDP-3-O-acylglucosamine N-acyltransferase (345 aa).

His-252 serves as the catalytic Proton acceptor.

Belongs to the transferase hexapeptide repeat family. LpxD subfamily. Homotrimer.

The catalysed reaction is a UDP-3-O-[(3R)-3-hydroxyacyl]-alpha-D-glucosamine + a (3R)-hydroxyacyl-[ACP] = a UDP-2-N,3-O-bis[(3R)-3-hydroxyacyl]-alpha-D-glucosamine + holo-[ACP] + H(+). The protein operates within bacterial outer membrane biogenesis; LPS lipid A biosynthesis. Catalyzes the N-acylation of UDP-3-O-acylglucosamine using 3-hydroxyacyl-ACP as the acyl donor. Is involved in the biosynthesis of lipid A, a phosphorylated glycolipid that anchors the lipopolysaccharide to the outer membrane of the cell. The polypeptide is UDP-3-O-acylglucosamine N-acyltransferase (Rickettsia rickettsii).